The chain runs to 98 residues: NADH-ubiquinone oxidoreductase chain 4L (98 aa).

3 helical membrane-spanning segments follow: residues 1 to 21, 30 to 50, and 61 to 81; these read MSMVYINIFLAFILSFMGLLI, LLCLEGMMLSLFIMMTVTILT, and IILLVFAACEAALGLSLLVMI.

It belongs to the complex I subunit 4L family. Core subunit of respiratory chain NADH dehydrogenase (Complex I) which is composed of 45 different subunits.

The protein resides in the mitochondrion inner membrane. It carries out the reaction a ubiquinone + NADH + 5 H(+)(in) = a ubiquinol + NAD(+) + 4 H(+)(out). Core subunit of the mitochondrial membrane respiratory chain NADH dehydrogenase (Complex I) which catalyzes electron transfer from NADH through the respiratory chain, using ubiquinone as an electron acceptor. Part of the enzyme membrane arm which is embedded in the lipid bilayer and involved in proton translocation. The sequence is that of NADH-ubiquinone oxidoreductase chain 4L (MT-ND4L) from Martes americana (American marten).